The primary structure comprises 833 residues: Urease (833 aa).

The region spanning 395 to 833 (GALDVHVHYI…LPLTRRYFVY (439 aa)) is the Urease domain. Residues histidine 400 and histidine 402 each contribute to the Ni(2+) site. The urea site is built by histidine 402 and alanine 433. Residue lysine 483 participates in Ni(2+) binding. Lysine 483 carries the N6-carboxylysine modification. Residues histidine 485 and histidine 512 each coordinate urea. Ni(2+) is bound by residues histidine 512 and histidine 538. Histidine 586 (proton donor) is an active-site residue. Position 626 (aspartate 626) interacts with Ni(2+). Alanine 629 serves as a coordination point for urea.

In the C-terminal section; belongs to the metallo-dependent hydrolases superfamily. Urease alpha subunit family. Homohexamer. Ni(2+) serves as cofactor. Post-translationally, carboxylation allows a single lysine to coordinate two nickel ions.

It carries out the reaction urea + 2 H2O + H(+) = hydrogencarbonate + 2 NH4(+). Its pathway is nitrogen metabolism; urea degradation; CO(2) and NH(3) from urea (urease route): step 1/1. With respect to regulation, the urease accessory proteins URE4, URE6 and URE7 are required for urease activity, URE7 supplying nickel for the functional urease. Plays a nutritional role via nitrogen acquisition in the environment. Contributes to the central nervous system invasion by enhancing yeast sequestration within microcapillary beds (such as within the brain) during hematogenous spread, thereby facilitating blood-to-brain invasion by C.neoformans. Affects fitness within the mammalian phagosome, promoting non-lytic exocytosis while delaying intracellular replication and thus reducing phagolysosomal membrane damage, events that could facilitate cryptococcal dissemination when transported inside macrophages. Urease activity is also associated with the regulation of key intracellular metabolic pathways, including melanin biosynthesis, polyamine biosynthesis, as well as intracellular levels of proline and reactive oxygen species. The protein is Urease of Cryptococcus neoformans var. grubii serotype A (strain H99 / ATCC 208821 / CBS 10515 / FGSC 9487) (Filobasidiella neoformans var. grubii).